Reading from the N-terminus, the 434-residue chain is Xylose isomerase (434 aa).

Active-site residues include His99 and Asp102. Residues Glu230, Glu266, His269, Asp294, Asp305, Asp307, and Asp337 each contribute to the Mg(2+) site.

The protein belongs to the xylose isomerase family. Homotetramer. Mg(2+) serves as cofactor.

Its subcellular location is the cytoplasm. It carries out the reaction alpha-D-xylose = alpha-D-xylulofuranose. This Dinoroseobacter shibae (strain DSM 16493 / NCIMB 14021 / DFL 12) protein is Xylose isomerase.